Reading from the N-terminus, the 572-residue chain is Putative carbohydrate transport ATP-binding protein MPN_258 (572 aa).

2 consecutive ABC transporter domains span residues 6 to 253 and 327 to 572; these read FRME…MGKE and RFIR…LIMQ. 40–47 serves as a coordination point for ATP; the sequence is GENGAGKS.

It belongs to the ABC transporter superfamily.

The protein resides in the cell membrane. Its function is as follows. Part of the ABC transporter complex involved in carbohydrates import. Probably responsible for energy coupling to the transport system. The chain is Putative carbohydrate transport ATP-binding protein MPN_258 from Mycoplasma pneumoniae (strain ATCC 29342 / M129 / Subtype 1) (Mycoplasmoides pneumoniae).